The sequence spans 389 residues: Na(+)/H(+) antiporter NhaA (389 aa).

Helical transmembrane passes span 14 to 34 (AGGILLLVAVALAMLMANSPL), 59 to 79 (LILWINDGLMAVFFLLIGLEV), 95 to 115 (SLPTFAAIGGMLVPAGVYLLF), 124 to 144 (AGWAIPAATDIAFALGIMALL), 154 to 174 (VFLLALAIIDDLGVIVIIALF), 177 to 197 (TDLSTISLVIASLAIAGLVGL), 213 to 233 (LILWVAVLKSGVHATLAGVII), 257 to 277 (PWSTFFILPVFAFANAGVYVG), 292 to 312 (IALGLMLGKPIGVMVFSYIAV), 328 to 348 (IAPVAAMCGIGFTMSMFIASL), and 363 to 383 (LGTLIGSIMAALVGYFWLSKV).

Belongs to the NhaA Na(+)/H(+) (TC 2.A.33) antiporter family.

Its subcellular location is the cell inner membrane. The enzyme catalyses Na(+)(in) + 2 H(+)(out) = Na(+)(out) + 2 H(+)(in). Na(+)/H(+) antiporter that extrudes sodium in exchange for external protons. The sequence is that of Na(+)/H(+) antiporter NhaA from Shewanella baltica (strain OS195).